A 655-amino-acid polypeptide reads, in one-letter code: MQAARIAPSLGRQLLRFGGGSSRPTALLGQPWPGPARRPYAGGAAQLALDKSDSHLSDALNKAKPAKAESKSFAVAMFKGQLTTDQVFPYPSVLNQEQTEFLKELVEPVSRFFEEVNDPAKNDTLEMVEETTLQGLKELGAFGLQVPSELGGVGLCNTQYARLVEIVGMHDLAVGITLGAHQSIGFKGILLFGTKAQKEKYLPKLASGETLAAFCLTEPSSGSDAASIRTSAVPSPCGKYYTLNGSKLWISNGGLADIFTVFAKTPVTDPATGAVKEKITAFVVERGFGGVTHGPPEKKMGIKASNTAEVLFDGVRVPSENVLGEVGSGFKVAMHILNNGRFGMAAALAGTMRGIITKAVDYATNRIQFGEKIHNFGLIQEKLARMVMLQYVTESMAYMVSANMDQGSTDFQIEAAISKIFGSEAAWKVTDECIQIMGGMGFMKEPGVERVLRDLRIFRIFEGTNDILRLFVALQGCMDKGKELSGLGSALKNPFGNAGLLLGEAGKQLRRRAGLGSGLSLSGIVHPELSRSGELAVQALEQFATVVEAKLIKHKKGIVNEQFLLQRLADGAIDLYAMVVVLSRASRSLSEGHHTAQHEKMLCDTWCIEAAARIREGMAALQSDPRQHELYRNFKSISKALVERGGVVTNNPLGF.

The N-terminal 40 residues, 1-40, are a transit peptide targeting the mitochondrion; sequence MQAARIAPSLGRQLLRFGGGSSRPTALLGQPWPGPARRPY. A catalytic region spans residues 41–482; sequence AGGAAQLALD…ALQGCMDKGK (442 aa). Lysine 51 carries the N6-acetyllysine modification. N6-acetyllysine; alternate is present on lysine 71. Lysine 71 is modified (N6-succinyllysine; alternate). An N6-succinyllysine modification is found at lysine 195. 214–223 provides a ligand contact to FAD; sequence FCLTEPSSGS. The residue at position 237 (cysteine 237) is an S-nitrosocysteine. Lysine 239 is modified (N6-acetyllysine; alternate). Lysine 239 carries the N6-succinyllysine; alternate modification. Residue 249–251 participates in FAD binding; it reads WIS. 2 positions are modified to N6-acetyllysine; alternate: lysine 276 and lysine 278. N6-succinyllysine; alternate is present on residues lysine 276 and lysine 278. An N6-acetyllysine modification is found at lysine 298. Residue lysine 331 is modified to N6-acetyllysine; alternate. The residue at position 331 (lysine 331) is an N6-succinyllysine; alternate. At lysine 372 the chain carries N6-succinyllysine. 461–463 contacts substrate; that stretch reads FEG. Glutamate 462 serves as the catalytic Proton acceptor. Residue 464–466 participates in FAD binding; it reads TND. At lysine 482 the chain carries N6-acetyllysine; alternate. An N6-succinyllysine; alternate modification is found at lysine 482. A membrane-anchoring region spans residues 483–516; sequence ELSGLGSALKNPFGNAGLLLGEAGKQLRRRAGLG. Phosphoserine occurs at positions 517 and 522. Position 550 is an N6-acetyllysine (lysine 550). Lysine 556 is modified (N6-acetyllysine; alternate). Lysine 556 is modified (N6-succinyllysine; alternate). Glutamine 562 provides a ligand contact to FAD. Lysine 639 is modified (N6-succinyllysine).

The protein belongs to the acyl-CoA dehydrogenase family. As to quaternary structure, homodimer. Homodimerizes after import into the mitochondrion. The cofactor is FAD. S-nitrosylation at Cys-237 in liver improves catalytic efficiency.

The protein localises to the mitochondrion inner membrane. It catalyses the reaction a very-long-chain 2,3-saturated fatty acyl-CoA + oxidized [electron-transfer flavoprotein] + H(+) = a very-long-chain (2E)-enoyl-CoA + reduced [electron-transfer flavoprotein]. The catalysed reaction is dodecanoyl-CoA + oxidized [electron-transfer flavoprotein] + H(+) = (2E)-dodecenoyl-CoA + reduced [electron-transfer flavoprotein]. It carries out the reaction tetradecanoyl-CoA + oxidized [electron-transfer flavoprotein] + H(+) = (2E)-tetradecenoyl-CoA + reduced [electron-transfer flavoprotein]. The enzyme catalyses oxidized [electron-transfer flavoprotein] + hexadecanoyl-CoA + H(+) = (2E)-hexadecenoyl-CoA + reduced [electron-transfer flavoprotein]. It catalyses the reaction octadecanoyl-CoA + oxidized [electron-transfer flavoprotein] + H(+) = (2E)-octadecenoyl-CoA + reduced [electron-transfer flavoprotein]. The catalysed reaction is eicosanoyl-CoA + oxidized [electron-transfer flavoprotein] + H(+) = (2E)-eicosenoyl-CoA + reduced [electron-transfer flavoprotein]. It carries out the reaction docosanoyl-CoA + oxidized [electron-transfer flavoprotein] + H(+) = (2E)-docosenoyl-CoA + reduced [electron-transfer flavoprotein]. The enzyme catalyses tetracosanoyl-CoA + oxidized [electron-transfer flavoprotein] + H(+) = (2E)-tetracosenoyl-CoA + reduced [electron-transfer flavoprotein]. Its pathway is lipid metabolism; mitochondrial fatty acid beta-oxidation. Very long-chain specific acyl-CoA dehydrogenase is one of the acyl-CoA dehydrogenases that catalyze the first step of mitochondrial fatty acid beta-oxidation, an aerobic process breaking down fatty acids into acetyl-CoA and allowing the production of energy from fats. The first step of fatty acid beta-oxidation consists in the removal of one hydrogen from C-2 and C-3 of the straight-chain fatty acyl-CoA thioester, resulting in the formation of trans-2-enoyl-CoA. Among the different mitochondrial acyl-CoA dehydrogenases, very long-chain specific acyl-CoA dehydrogenase acts specifically on acyl-CoAs with saturated 12 to 24 carbons long primary chains. The chain is Very long-chain specific acyl-CoA dehydrogenase, mitochondrial from Macaca fascicularis (Crab-eating macaque).